The following is a 477-amino-acid chain: MAQGNNYGQTSNGVAEESPNMLVYRKMEDVIARMQDEKNGIPIRTVKSFLSKIPSVFSGSDIVQWLIKNLTIEDPVEALHLGTLMAAHGYFFPISDHVLTLKDDGTFYRFQTPYFWPSNCWEPENTDYAVYLCKRTMQNKARLELADYEAESLARLQRAFARKWEFIFMQAEAQAKVDKKRDKIERKILDSQERAFWDVHRPVPGCVNTTEVDIKKSSRMRNPHKTRKSVYGLQNDIRSHSPTHTPTPETKPPTEDELHRQIKYWQIQLDRHRLKMSKVADSLLSYTEQYVEYDPFLVPPDPSNPWLSDDTTFWELEASKEPSQQRVKRWGFGMDEALKDPVGREQFLKFLESEFSSENLRFWLAVEDLKKRPIREVPSRVQEIWQEFLAPGAPSAINLDSKSYDKTTQNVKEPGRYTFEDAQEHIYKLMKSDSYPRFIRSSAYQELLQAKRKGRNIPIFPCHKNCTPTLRASTNLL.

The DEP domain occupies 37 to 112 (EKNGIPIRTV…DDGTFYRFQT (76 aa)). Residues Ser229 and Ser241 each carry the phosphoserine modification. A disordered region spans residues 236-257 (DIRSHSPTHTPTPETKPPTEDE). Thr243 is subject to Phosphothreonine. A G protein gamma domain is found at 255–316 (EDELHRQIKY…LSDDTTFWEL (62 aa)). One can recognise an RGS domain in the interval 333–448 (GMDEALKDPV…IRSSAYQELL (116 aa)). Ser434 is subject to Phosphoserine.

In terms of assembly, interacts with GNB5, forming the RGS7-GNB5 complex. Interacts with GPR158; promotes the GTPase activator activity of the RGS7-GNB5 complex in absence of glycine, in contrast GTPase activator activity of the RGS7-GNB5 complex is inhibited in presence of glycine. Interacts with GPR179. Interacts with PKD1; this prevents rapid proteasomal degradation. Interacts with RGS7BP, leading to regulate the subcellular location of the heterodimer formed with GNB5. Interacts (phosphorylated form) with 14-3-3 protein YWHAQ. Interacts with SNAPIN. Interacts with GNAI1. Interacts with GNAO1, GNAI3 and GNAZ. Palmitoylated. In terms of processing, ubiquitinated, leading to rapid proteasomal degradation. Post-translationally, phosphorylation and subsequent interaction with 14-3-3 proteins inhibits GAP activity. As to expression, brain-specific. Predominantly cerebellar granule cells.

It localises to the cytoplasm. The protein resides in the cytosol. Its subcellular location is the cell membrane. It is found in the membrane. Functionally, GTPase activator component of the RGS7-GNB5 complex that regulates G protein-coupled receptor signaling cascades. The RGS7-GNB5 complex acts as an inhibitor signal transduction by promoting the GTPase activity of G protein alpha subunits, such as GNAO1, thereby driving them into their inactive GDP-bound form. May play a role in synaptic vesicle exocytosis. Glycine-dependent regulation of the RGS7-GNB5 complex by GPR158 affects mood and cognition via its ability to regulate neuronal excitability in L2/L3 pyramidal neurons of the prefrontal cortex. Modulates the activity of potassium channels that are activated by GNAO1 in response to muscarinic acetylcholine receptor M2/CHRM2 signaling. This is Regulator of G-protein signaling 7 (Rgs7) from Rattus norvegicus (Rat).